The primary structure comprises 219 residues: Uracil phosphoribosyltransferase 1 (219 aa).

Residues Arg-33, Arg-42, and 76–79 contribute to the GTP site; that span reads DGRI. A 5-phospho-alpha-D-ribose 1-diphosphate-binding site is contributed by Arg-86. Arg-103 provides a ligand contact to GTP. Residue Arg-111 participates in 5-phospho-alpha-D-ribose 1-diphosphate binding. Residue Arg-132 participates in GTP binding. 5-phospho-alpha-D-ribose 1-diphosphate is bound by residues Asp-138 and 138–146; that span reads DPMLATGGS. Tyr-202 serves as a coordination point for D-ribose 5-phosphate. Uracil is bound by residues Ile-203 and 208-210; that span reads GDF. Position 209 (Asp-209) interacts with 5-phospho-alpha-D-ribose 1-diphosphate.

Belongs to the UPRTase family. It depends on Mg(2+) as a cofactor.

The catalysed reaction is UMP + diphosphate = 5-phospho-alpha-D-ribose 1-diphosphate + uracil. The protein operates within pyrimidine metabolism; UMP biosynthesis via salvage pathway; UMP from uracil: step 1/1. Allosterically activated by GTP. Catalyzes the conversion of uracil and 5-phospho-alpha-D-ribose 1-diphosphate (PRPP) to UMP and diphosphate. The chain is Uracil phosphoribosyltransferase 1 from Schizosaccharomyces pombe (strain 972 / ATCC 24843) (Fission yeast).